The chain runs to 643 residues: UPF0313 protein CLD_0573 (643 aa).

In terms of domain architecture, Radical SAM core spans 295–566; sequence AIKEVKFSIT…RMQRALLQFS (272 aa). Cysteine 309, cysteine 313, and cysteine 316 together coordinate [4Fe-4S] cluster. The tract at residues 598–643 is disordered; that stretch reads NKPYKKSHKKNNAKNNNNHYNKNNNKNKDISKKNKKNSLSKHKKRK. Over residues 600–609 the composition is skewed to basic residues; the sequence is PYKKSHKKNN. Positions 610-621 are enriched in low complexity; that stretch reads AKNNNNHYNKNN. Residues 630 to 643 show a composition bias toward basic residues; that stretch reads KNKKNSLSKHKKRK.

It belongs to the UPF0313 family. The cofactor is [4Fe-4S] cluster.

This is UPF0313 protein CLD_0573 from Clostridium botulinum (strain Okra / Type B1).